The following is a 296-amino-acid chain: Formamidopyrimidine-DNA glycosylase (296 aa).

P2 (schiff-base intermediate with DNA) is an active-site residue. E3 acts as the Proton donor in catalysis. K58 functions as the Proton donor; for beta-elimination activity in the catalytic mechanism. DNA is bound by residues H104, R126, and K169. Residues 260–296 (SVYDRESQACRTPGCGGTVARIVQAGRSTFYCATCQK) form an FPG-type zinc finger. The active-site Proton donor; for delta-elimination activity is R286.

This sequence belongs to the FPG family. In terms of assembly, monomer. Zn(2+) serves as cofactor.

It carries out the reaction Hydrolysis of DNA containing ring-opened 7-methylguanine residues, releasing 2,6-diamino-4-hydroxy-5-(N-methyl)formamidopyrimidine.. The catalysed reaction is 2'-deoxyribonucleotide-(2'-deoxyribose 5'-phosphate)-2'-deoxyribonucleotide-DNA = a 3'-end 2'-deoxyribonucleotide-(2,3-dehydro-2,3-deoxyribose 5'-phosphate)-DNA + a 5'-end 5'-phospho-2'-deoxyribonucleoside-DNA + H(+). Involved in base excision repair of DNA damaged by oxidation or by mutagenic agents. Acts as a DNA glycosylase that recognizes and removes damaged bases. Has a preference for oxidized purines, such as 7,8-dihydro-8-oxoguanine (8-oxoG). Has AP (apurinic/apyrimidinic) lyase activity and introduces nicks in the DNA strand. Cleaves the DNA backbone by beta-delta elimination to generate a single-strand break at the site of the removed base with both 3'- and 5'-phosphates. In Rhizobium johnstonii (strain DSM 114642 / LMG 32736 / 3841) (Rhizobium leguminosarum bv. viciae), this protein is Formamidopyrimidine-DNA glycosylase.